Consider the following 406-residue polypeptide: Transcriptional activator NprA (406 aa).

TPR repeat units follow at residues 125–158 (YYYYKFLGLLYYCKEKYEDALEYYKKAEQRFRSQ), 206–239 (AECHILLGICYRRYGEVDQAIECYSLAHKIAQII), 246–279 (GTIEHNLGYLMSMKHEHYEAIQHYKKSLLYKRNS), and 285–318 (FITLFSLIKEYYVSKNYKKALANVEESLQLLKRE).

In terms of biological role, activates the transcription of nprS by about five fold. May bind to the upstream region of nprS promoter. This chain is Transcriptional activator NprA (nprA), found in Geobacillus stearothermophilus (Bacillus stearothermophilus).